The chain runs to 873 residues: Zinc fingers and homeoboxes protein 1 (873 aa).

The segment at 1–63 is disordered; that stretch reads MASRRKSTTP…ESVDSDNQQN (63 aa). A compositionally biased stretch (acidic residues) spans 18–30; sequence QDPDLELISDLDE. Residue T36 is modified to Phosphothreonine. A phosphoserine mark is found at S45, S47, and S48. 2 C2H2-type zinc fingers span residues 70-93 and 102-125; these read YECK…DSEH and YVCV…LKYH. K159 participates in a covalent cross-link: Glycyl lysine isopeptide (Lys-Gly) (interchain with G-Cter in SUMO2). The residue at position 202 (S202) is a Phosphoserine. The segment at 202-236 is disordered; it reads SVEDVPEEKENEIKPDREEIVENPSSSASESNTST. The segment covering 212–221 has biased composition (basic and acidic residues); the sequence is NEIKPDREEI. Positions 223 to 236 are enriched in low complexity; that stretch reads ENPSSSASESNTST. Positions 272–432 are required for dimerization; sequence NSNLIPKVLI…QNNVQKSQVP (161 aa). Residues 272–564 form a required for interaction with NFYA region; the sequence is NSNLIPKVLI…AQPKQSWNPF (293 aa). A DNA-binding region (homeobox 1) is located at residues 284–346; the sequence is NSIPTYNAAL…LKHGVSWTPE (63 aa). Residues K441, K454, K485, and K629 each participate in a glycyl lysine isopeptide (Lys-Gly) (interchain with G-Cter in SUMO2) cross-link. DNA-binding regions (homeobox) lie at residues 464–526 and 569–630; these read SFGI…KSNQ and PQKF…EEKM. 2 disordered regions span residues 626 to 667 and 732 to 769; these read KEEK…ICKK and SSMN…INNW. S648 is subject to Phosphoserine. Positions 660-722 form a DNA-binding region, homeobox 4; that stretch reads STGKICKKTP…YAWKNGNLKW (63 aa). A required for nuclear localization region spans residues 734–768; sequence MNGLSSLRKRGRGRPKGRGRGRPRGRPRGSKRINN. Residues 740–764 are compositionally biased toward basic residues; sequence LRKRGRGRPKGRGRGRPRGRPRGSK. Residue S774 is modified to Phosphoserine. The homeobox 5 DNA-binding region spans 777-832; sequence KFKTGTAILKDYYLKHKFLNEQDLDELVNKSHMGYEQVREWFAERQRRSELGIELF. The segment at 829 to 873 is disordered; it reads IELFEENEEEDEVIDDQEEDEEETDDSDTWEPPRHVKRKLSKSDD. Acidic residues predominate over residues 831-857; sequence LFEENEEEDEVIDDQEEDEEETDDSDT. The tract at residues 831-873 is required for repressor activity; sequence LFEENEEEDEVIDDQEEDEEETDDSDTWEPPRHVKRKLSKSDD. The segment covering 863–873 has biased composition (basic residues); that stretch reads HVKRKLSKSDD.

It belongs to the ZHX family. Forms homodimers. Also forms heterodimers with ZHX3 which is a prerequisite for repressor activity and with ZHX2. Interacts with NFYA. Interacts with ATF7IP.

The protein localises to the nucleus. Its function is as follows. Acts as a transcriptional repressor. This is Zinc fingers and homeoboxes protein 1 (ZHX1) from Gorilla gorilla gorilla (Western lowland gorilla).